The chain runs to 168 residues: NADH-quinone oxidoreductase subunit E 2 (168 aa).

The [2Fe-2S] cluster site is built by C77, C82, C118, and C122.

It belongs to the complex I 24 kDa subunit family. [2Fe-2S] cluster is required as a cofactor.

It carries out the reaction a quinone + NADH + 5 H(+)(in) = a quinol + NAD(+) + 4 H(+)(out). Functionally, NDH-1 shuttles electrons from NADH, via FMN and iron-sulfur (Fe-S) centers, to quinones in the respiratory chain. The immediate electron acceptor for the enzyme in this species is believed to be ubiquinone. Couples the redox reaction to proton translocation (for every two electrons transferred, four hydrogen ions are translocated across the cytoplasmic membrane), and thus conserves the redox energy in a proton gradient. In Rhizobium meliloti (strain 1021) (Ensifer meliloti), this protein is NADH-quinone oxidoreductase subunit E 2 (nuoE2).